The chain runs to 181 residues: ATP-dependent protease subunit HslV (181 aa).

Thr-7 is an active-site residue. The Na(+) site is built by Ala-162, Cys-165, and Thr-168.

The protein belongs to the peptidase T1B family. HslV subfamily. In terms of assembly, a double ring-shaped homohexamer of HslV is capped on each side by a ring-shaped HslU homohexamer. The assembly of the HslU/HslV complex is dependent on binding of ATP.

Its subcellular location is the cytoplasm. It catalyses the reaction ATP-dependent cleavage of peptide bonds with broad specificity.. With respect to regulation, allosterically activated by HslU binding. Its function is as follows. Protease subunit of a proteasome-like degradation complex believed to be a general protein degrading machinery. This Coxiella burnetii (strain RSA 493 / Nine Mile phase I) protein is ATP-dependent protease subunit HslV.